A 475-amino-acid polypeptide reads, in one-letter code: Cobyric acid synthase (475 aa).

In terms of domain architecture, GATase cobBQ-type spans 244-431 (KLNVVVPVLT…LHGFFDEADV (188 aa)). The active-site Nucleophile is cysteine 325. The active site involves histidine 423.

This sequence belongs to the CobB/CobQ family. CobQ subfamily.

It functions in the pathway cofactor biosynthesis; adenosylcobalamin biosynthesis. In terms of biological role, catalyzes amidations at positions B, D, E, and G on adenosylcobyrinic A,C-diamide. NH(2) groups are provided by glutamine, and one molecule of ATP is hydrogenolyzed for each amidation. This is Cobyric acid synthase from Vibrio campbellii (strain ATCC BAA-1116).